The sequence spans 395 residues: F-box/kelch-repeat protein At4g39570 (395 aa).

Over residues 1 to 25 (MSSPERKRKRVTSTKNPSVKKKKKI) the composition is skewed to basic residues. The tract at residues 1-29 (MSSPERKRKRVTSTKNPSVKKKKKISPVP) is disordered. Residues 29-75 (PTPIPSLPDDLLVSIFARVSRLYYPILSLVSKSFRSLLRSPELYETR) enclose the F-box domain. Kelch repeat units lie at residues 150 to 197 (DIYF…VIDG) and 198 to 246 (KIYV…RSAY).

This is F-box/kelch-repeat protein At4g39570 from Arabidopsis thaliana (Mouse-ear cress).